The sequence spans 293 residues: HTH-type transcriptional regulator HdfR (293 aa).

The 58-residue stretch at 1–58 folds into the HTH lysR-type domain; that stretch reads MDTELLKTFLEVSRTRHFGRAAESLYLTQSAVSFRIRQLENQLGANLFTRHRNNIRLT. A DNA-binding region (H-T-H motif) is located at residues 18-37; it reads FGRAAESLYLTQSAVSFRIR.

It belongs to the LysR transcriptional regulatory family.

Negatively regulates the transcription of the flagellar master operon flhDC by binding to the upstream region of the operon. This chain is HTH-type transcriptional regulator HdfR, found in Yersinia enterocolitica serotype O:8 / biotype 1B (strain NCTC 13174 / 8081).